Consider the following 190-residue polypeptide: Holliday junction branch migration complex subunit RuvA (190 aa).

The segment at 1–64 (MIGRITGTLI…EDAHILYGFA (64 aa)) is domain I. The tract at residues 65–137 (TAAERGAFRE…MRGKLGADIG (73 aa)) is domain II. Residues 137 to 141 (GATAH) are flexible linker. Positions 142–190 (AVPDSQTDILNALLALGYSDKESQAALKKLPEGTGVSEGIRLALKALVR) are domain III.

This sequence belongs to the RuvA family. As to quaternary structure, homotetramer. Forms an RuvA(8)-RuvB(12)-Holliday junction (HJ) complex. HJ DNA is sandwiched between 2 RuvA tetramers; dsDNA enters through RuvA and exits via RuvB. An RuvB hexamer assembles on each DNA strand where it exits the tetramer. Each RuvB hexamer is contacted by two RuvA subunits (via domain III) on 2 adjacent RuvB subunits; this complex drives branch migration. In the full resolvosome a probable DNA-RuvA(4)-RuvB(12)-RuvC(2) complex forms which resolves the HJ.

The protein resides in the cytoplasm. Functionally, the RuvA-RuvB-RuvC complex processes Holliday junction (HJ) DNA during genetic recombination and DNA repair, while the RuvA-RuvB complex plays an important role in the rescue of blocked DNA replication forks via replication fork reversal (RFR). RuvA specifically binds to HJ cruciform DNA, conferring on it an open structure. The RuvB hexamer acts as an ATP-dependent pump, pulling dsDNA into and through the RuvAB complex. HJ branch migration allows RuvC to scan DNA until it finds its consensus sequence, where it cleaves and resolves the cruciform DNA. The chain is Holliday junction branch migration complex subunit RuvA from Bordetella petrii (strain ATCC BAA-461 / DSM 12804 / CCUG 43448).